Here is a 351-residue protein sequence, read N- to C-terminus: Photosystem II D2 protein (351 aa).

The chain crosses the membrane as a helical span at residues 39–59 (CAYLALGGWLTGTTFVTSWYT). Histidine 116 provides a ligand contact to chlorophyll a. The chain crosses the membrane as a helical span at residues 123–139 (GFMLRQFEIARLVGIRP). Pheophytin a is bound by residues glutamine 128 and asparagine 141. Residues 151–164 (VFVSVFLMYPLGQS) form a helical membrane-spanning segment. Histidine 196 serves as a coordination point for chlorophyll a. Residues 206 to 226 (GALLCAIHGATVENTLFEDGE) traverse the membrane as a helical segment. A plastoquinone-binding residues include histidine 213 and phenylalanine 260. Histidine 213 contacts Fe cation. A Fe cation-binding site is contributed by histidine 267. Residues 277–293 (GLWMSAIGIVGLALNLR) form a helical membrane-spanning segment.

Belongs to the reaction center PufL/M/PsbA/D family. As to quaternary structure, PSII is composed of 1 copy each of membrane proteins PsbA, PsbB, PsbC, PsbD, PsbE, PsbF, PsbH, PsbI, PsbJ, PsbK, PsbL, PsbM, PsbT, PsbX, PsbY, PsbZ, Psb30/Ycf12, peripheral proteins PsbO, CyanoQ (PsbQ), PsbU, PsbV and a large number of cofactors. It forms dimeric complexes. It depends on The D1/D2 heterodimer binds P680, chlorophylls that are the primary electron donor of PSII, and subsequent electron acceptors. It shares a non-heme iron and each subunit binds pheophytin, quinone, additional chlorophylls, carotenoids and lipids. There is also a Cl(-1) ion associated with D1 and D2, which is required for oxygen evolution. The PSII complex binds additional chlorophylls, carotenoids and specific lipids. as a cofactor.

It localises to the cellular thylakoid membrane. The enzyme catalyses 2 a plastoquinone + 4 hnu + 2 H2O = 2 a plastoquinol + O2. Its function is as follows. Photosystem II (PSII) is a light-driven water:plastoquinone oxidoreductase that uses light energy to abstract electrons from H(2)O, generating O(2) and a proton gradient subsequently used for ATP formation. It consists of a core antenna complex that captures photons, and an electron transfer chain that converts photonic excitation into a charge separation. The D1/D2 (PsbA/PsbD) reaction center heterodimer binds P680, the primary electron donor of PSII as well as several subsequent electron acceptors. D2 is needed for assembly of a stable PSII complex. The chain is Photosystem II D2 protein from Crocosphaera subtropica (strain ATCC 51142 / BH68) (Cyanothece sp. (strain ATCC 51142)).